Here is a 418-residue protein sequence, read N- to C-terminus: MLHPRARTMLLLSLPAVAIGIASSLILIVVMKIASVLQNLLWLRLPGTLGIAQDSPFWIIAILTLTGIAVGLVIRFSQGHAGPDPACEPLIGAPVPPSALPGLIVALILGLAGGVSLGPEHPIMTVNIALAVAIGARLLPRVNRMEWTILASAGTIGALFGTPVAAALIFSQTLNGSSEVPLWDRLFAPLMAAAAGALTTGLFFHPHFSLPIAHYGQMEMTDILSGAIVAAIAIAAGMVAVWCLPRLHAMMHQIKNPVLMLGVGGFILGILGVIAGPVSLFKGLDEMQQMVANQAFSTSDYFLLAVIKLAALVVAAASGFRGGRIFPAVFVGVALGLMLHEHVPAVPAAITVSCAILGIVLVVTRDGWLSLFMAAVVVPNTTLLPLLCIVMLPAWLLLAGKPMMMVNRPKQQPPHDNV.

The next 12 helical transmembrane spans lie at 10 to 30, 54 to 74, 99 to 119, 120 to 140, 149 to 169, 186 to 206, 223 to 243, 258 to 278, 300 to 320, 322 to 342, 343 to 363, and 371 to 391; these read LLLS…LIVV, DSPF…GLVI, ALPG…SLGP, EHPI…RLLP, ILAS…AALI, LFAP…FFHP, ILSG…AVWC, VLML…AGPV, DYFL…ASGF, GGRI…LHEH, VPAV…VLVV, and LFMA…CIVM.

This sequence belongs to the chloride channel (TC 2.A.49) family.

It localises to the cell membrane. This is Putative ion-transport protein YfeO from Escherichia coli (strain SMS-3-5 / SECEC).